The chain runs to 171 residues: Small ribosomal subunit protein uS5 (171 aa).

The 64-residue stretch at 16-79 (LVERLVTVDR…EAAKRNMITV (64 aa)) folds into the S5 DRBM domain.

This sequence belongs to the universal ribosomal protein uS5 family. In terms of assembly, part of the 30S ribosomal subunit. Contacts proteins S4 and S8.

In terms of biological role, with S4 and S12 plays an important role in translational accuracy. Located at the back of the 30S subunit body where it stabilizes the conformation of the head with respect to the body. The chain is Small ribosomal subunit protein uS5 from Psychrobacter arcticus (strain DSM 17307 / VKM B-2377 / 273-4).